The chain runs to 405 residues: MSSTGSSVSTSGLVLPSTPLAEPGKEVPLVVNTPNRAKPPRHWIDLSIEERVQAVKDFGVPAFRARQISAHVFERWEVDPTQWTDLPKAARQEIADAWFPVLLTKVSQQSCDRGTTVKTLWRLHGGALVESVLMYYPATRHSAARATLCLSSQAGCGMACPFCATGQGGIQRNMSTAEIVSQVLAANRLIAAGEVPGASGRVHNIVFMGMGEPMANYRSVLTAIRTLTADGPDGVGMSARALTLSTVGLVPRIKALTQEGIPVTLAVSLHAPDDELRDELIPVNRRWKVDELLDAAWHYAEKTKRRVSIEYALMKDINDQADRAAVLARQIRRRGDWTWAHVNLIPLNPTPGSRWTASRPEDQDAFVETLERWKIPVTVRDTRGSEIDGACGQLAAVGRSEGLGS.

Residues M1–L15 are compositionally biased toward low complexity. A disordered region spans residues M1–P34. The active-site Proton acceptor is E130. The Radical SAM core domain maps to S142–E386. C149 and C391 are oxidised to a cystine. [4Fe-4S] cluster is bound by residues C156, C160, and C163. Residues G211 to E212, S245, S268 to H270, and N348 each bind S-adenosyl-L-methionine. The active-site S-methylcysteine intermediate is C391.

The protein belongs to the radical SAM superfamily. RlmN family. It depends on [4Fe-4S] cluster as a cofactor.

The protein resides in the cytoplasm. The catalysed reaction is adenosine(2503) in 23S rRNA + 2 reduced [2Fe-2S]-[ferredoxin] + 2 S-adenosyl-L-methionine = 2-methyladenosine(2503) in 23S rRNA + 5'-deoxyadenosine + L-methionine + 2 oxidized [2Fe-2S]-[ferredoxin] + S-adenosyl-L-homocysteine. The enzyme catalyses adenosine(37) in tRNA + 2 reduced [2Fe-2S]-[ferredoxin] + 2 S-adenosyl-L-methionine = 2-methyladenosine(37) in tRNA + 5'-deoxyadenosine + L-methionine + 2 oxidized [2Fe-2S]-[ferredoxin] + S-adenosyl-L-homocysteine. In terms of biological role, specifically methylates position 2 of adenine 2503 in 23S rRNA and position 2 of adenine 37 in tRNAs. The polypeptide is Probable dual-specificity RNA methyltransferase RlmN (Cutibacterium acnes (strain DSM 16379 / KPA171202) (Propionibacterium acnes)).